A 341-amino-acid chain; its full sequence is HTH-type transcriptional repressor PurR (341 aa).

Positions 2–56 (ATIKDVAKHAGVSTTTVSHVINKTRFVAENTKAAVWAAIKELHYSPSAVARSLKV) constitute an HTH lacI-type domain. Residues 4–23 (IKDVAKHAGVSTTTVSHVIN) constitute a DNA-binding region (H-T-H motif). Residues 48–56 (SAVARSLKV) mediate DNA binding. Positions 73, 190, 192, 221, and 275 each coordinate hypoxanthine.

As to quaternary structure, homodimer.

Its pathway is purine metabolism; purine nucleotide biosynthesis [regulation]. In terms of biological role, is the main repressor of the genes involved in the de novo synthesis of purine nucleotides, regulating purB, purC, purEK, purF, purHD, purL, purMN and guaBA expression. PurR is allosterically activated to bind its cognate DNA by binding the purine corepressors, hypoxanthine or guanine, thereby effecting transcription repression. In Yersinia pseudotuberculosis serotype O:1b (strain IP 31758), this protein is HTH-type transcriptional repressor PurR.